The primary structure comprises 351 residues: MTKSVDYQLIAATFSTGLLASSSIVWSYIFATVFSFSSMLTWQSVLYVWSLPIVQLAAIFCAVRVNFSRLGLLLLLNCGIAFLSFISWSLNWSISVLVPGLFVINFLSLMIWLIVCFDVVYLCPEIYHKYFELGFLASLTIHYCFNQFEIYLTNVMFAPFFICMLFGYIGFSHVWRHDMYIFGKMRCKPIYYTKRAKYIAFSAWQIMDVALFELICLWFLLLAMAAGCIALVMFSEVFLGVSTYLYLFMVGNFCCGSLIIYRSYVMTAVYSVVSLTAFFLILMGGYLFTKAQLSMLAAVMFFCYFHANGCLLYRIKKKLHRNITTPRFILNVCMLLNALLEITVLLAQKLT.

The next 11 helical transmembrane spans lie at 14-34 (FSTGLLASSSIVWSYIFATVF), 43-63 (QSVLYVWSLPIVQLAAIFCAV), 70-90 (LGLLLLLNCGIAFLSFISWSL), 97-117 (LVPGLFVINFLSLMIWLIVCF), 133-153 (LGFLASLTIHYCFNQFEIYLT), 155-175 (VMFAPFFICMLFGYIGFSHVW), 214-234 (LICLWFLLLAMAAGCIALVMF), 240-260 (GVSTYLYLFMVGNFCCGSLII), 268-288 (AVYSVVSLTAFFLILMGGYLF), 293-313 (LSMLAAVMFFCYFHANGCLLY), and 328-348 (FILNVCMLLNALLEITVLLAQ).

This sequence belongs to the herpesviridae BMRF2 family.

The protein localises to the host membrane. This Connochaetes taurinus (Blue wildebeest) protein is Gene 58 protein (58).